A 214-amino-acid chain; its full sequence is Adenylate kinase (214 aa).

Position 10–15 (Gly-10–Thr-15) interacts with ATP. Residues Ser-30–Val-59 are NMP. AMP contacts are provided by residues Thr-31, Arg-36, Lys-57 to Val-59, Gly-85 to Arg-88, and Gln-92. Positions Gly-122–Asp-159 are LID. ATP is bound by residues Arg-123 and Val-132–Tyr-133. Residues Arg-156 and Arg-167 each contribute to the AMP site. Arg-200 provides a ligand contact to ATP.

Belongs to the adenylate kinase family. As to quaternary structure, monomer.

Its subcellular location is the cytoplasm. It catalyses the reaction AMP + ATP = 2 ADP. Its pathway is purine metabolism; AMP biosynthesis via salvage pathway; AMP from ADP: step 1/1. In terms of biological role, catalyzes the reversible transfer of the terminal phosphate group between ATP and AMP. Plays an important role in cellular energy homeostasis and in adenine nucleotide metabolism. The chain is Adenylate kinase from Pectobacterium atrosepticum (strain SCRI 1043 / ATCC BAA-672) (Erwinia carotovora subsp. atroseptica).